Here is a 353-residue protein sequence, read N- to C-terminus: Photosystem II D2 protein (353 aa).

T2 is modified (N-acetylthreonine). The residue at position 2 (T2) is a Phosphothreonine. Residues 41–61 form a helical membrane-spanning segment; the sequence is CAYFALGGWFTGTTFVTSWYT. H118 contacts chlorophyll a. A helical membrane pass occupies residues 125–141; sequence GFMLRQFEIARSVQLRP. 2 residues coordinate pheophytin a: Q130 and N143. Residues 153–166 form a helical membrane-spanning segment; sequence VFVSVFLIYPLGQS. H198 contacts chlorophyll a. Residues 208–228 form a helical membrane-spanning segment; it reads AALLCAIHGATVENTLFEDGD. The a plastoquinone site is built by H215 and F262. H215 provides a ligand contact to Fe cation. A Fe cation-binding site is contributed by H269. A helical membrane pass occupies residues 279–295; it reads GLWMSALGVVGLALNLR.

This sequence belongs to the reaction center PufL/M/PsbA/D family. PSII is composed of 1 copy each of membrane proteins PsbA, PsbB, PsbC, PsbD, PsbE, PsbF, PsbH, PsbI, PsbJ, PsbK, PsbL, PsbM, PsbT, PsbX, PsbY, PsbZ, Psb30/Ycf12, at least 3 peripheral proteins of the oxygen-evolving complex and a large number of cofactors. It forms dimeric complexes. It depends on The D1/D2 heterodimer binds P680, chlorophylls that are the primary electron donor of PSII, and subsequent electron acceptors. It shares a non-heme iron and each subunit binds pheophytin, quinone, additional chlorophylls, carotenoids and lipids. There is also a Cl(-1) ion associated with D1 and D2, which is required for oxygen evolution. The PSII complex binds additional chlorophylls, carotenoids and specific lipids. as a cofactor.

The protein resides in the plastid. The protein localises to the chloroplast thylakoid membrane. It catalyses the reaction 2 a plastoquinone + 4 hnu + 2 H2O = 2 a plastoquinol + O2. In terms of biological role, photosystem II (PSII) is a light-driven water:plastoquinone oxidoreductase that uses light energy to abstract electrons from H(2)O, generating O(2) and a proton gradient subsequently used for ATP formation. It consists of a core antenna complex that captures photons, and an electron transfer chain that converts photonic excitation into a charge separation. The D1/D2 (PsbA/PsbD) reaction center heterodimer binds P680, the primary electron donor of PSII as well as several subsequent electron acceptors. D2 is needed for assembly of a stable PSII complex. The protein is Photosystem II D2 protein of Oenothera argillicola (Appalachian evening primrose).